The following is a 99-amino-acid chain: Bacterial microcompartment protein homohexamer (99 aa).

Residues 4 to 88 (ALGMIEVRGF…PHVNVDAALP (85 aa)) enclose the BMC domain.

It belongs to the bacterial microcompartments protein family. As to quaternary structure, homohexamer with a small central pore. When purified protein is examined by atomic force microscopy it dynamically makes uniform patches about 35 Angstroms thick with hexamers in the same orientation. In the BMC the concave side faces outward, with the N- and C-terminii exposed to the cytoplasm.

Its subcellular location is the bacterial microcompartment. In terms of biological role, the only hexameric shell protein in this bacterium, it forms the majority of the bacterial microcompartment (BMC) shell. Expression of 5 proteins in E.coli (BMC-H (Hoch_5815), BMC-P (Hoch_5814), and 3 BMC-T (Hoch_5812, Hoch_5816, Hoch_3341)) forms a 40 nm artificial BMC with a molecular mass of 6.5 MDa. There are 60 BMC-H hexamers per BMC. The shell facets are 20-30 Angstroms thick (a single hexamer layer), with 1 of BMC-T trimers protruding to the exterior. This chain is Bacterial microcompartment protein homohexamer, found in Haliangium ochraceum (strain DSM 14365 / JCM 11303 / SMP-2).